Here is a 971-residue protein sequence, read N- to C-terminus: Isoleucine--tRNA ligase (971 aa).

The short motif at 60–70 (PYANGDLHIGH) is the 'HIGH' region element. Residue E563 coordinates L-isoleucyl-5'-AMP. Positions 604 to 608 (KMSKS) match the 'KMSKS' region motif. Residue K607 coordinates ATP. Positions 922, 925, 942, and 945 each coordinate Zn(2+).

This sequence belongs to the class-I aminoacyl-tRNA synthetase family. IleS type 1 subfamily. In terms of assembly, monomer. Requires Zn(2+) as cofactor.

The protein localises to the cytoplasm. It carries out the reaction tRNA(Ile) + L-isoleucine + ATP = L-isoleucyl-tRNA(Ile) + AMP + diphosphate. In terms of biological role, catalyzes the attachment of isoleucine to tRNA(Ile). As IleRS can inadvertently accommodate and process structurally similar amino acids such as valine, to avoid such errors it has two additional distinct tRNA(Ile)-dependent editing activities. One activity is designated as 'pretransfer' editing and involves the hydrolysis of activated Val-AMP. The other activity is designated 'posttransfer' editing and involves deacylation of mischarged Val-tRNA(Ile). The sequence is that of Isoleucine--tRNA ligase from Acaryochloris marina (strain MBIC 11017).